We begin with the raw amino-acid sequence, 197 residues long: Fe/S biogenesis protein NfuA (197 aa).

[4Fe-4S] cluster-binding residues include Cys-155 and Cys-158.

Belongs to the NfuA family. In terms of assembly, homodimer. It depends on [4Fe-4S] cluster as a cofactor.

In terms of biological role, involved in iron-sulfur cluster biogenesis. Binds a 4Fe-4S cluster, can transfer this cluster to apoproteins, and thereby intervenes in the maturation of Fe/S proteins. Could also act as a scaffold/chaperone for damaged Fe/S proteins. This chain is Fe/S biogenesis protein NfuA, found in Pseudomonas savastanoi pv. phaseolicola (strain 1448A / Race 6) (Pseudomonas syringae pv. phaseolicola (strain 1448A / Race 6)).